A 303-amino-acid chain; its full sequence is tRNA pseudouridine synthase A (303 aa).

D59 serves as the catalytic Nucleophile. Y128 provides a ligand contact to substrate.

The protein belongs to the tRNA pseudouridine synthase TruA family. In terms of assembly, homodimer.

The catalysed reaction is uridine(38/39/40) in tRNA = pseudouridine(38/39/40) in tRNA. Functionally, formation of pseudouridine at positions 38, 39 and 40 in the anticodon stem and loop of transfer RNAs. The sequence is that of tRNA pseudouridine synthase A from Bifidobacterium longum (strain DJO10A).